The chain runs to 610 residues: Sterol O-acyltransferase 1 (610 aa).

2 positions are modified to phosphoserine: serine 21 and serine 45. The disordered stretch occupies residues 41–81 (SMEVSPRSSTTSLVEPVESTEGVESTEAERVAGKQEQEEEY). Basic and acidic residues predominate over residues 67–76 (EAERVAGKQE). A run of 5 helical transmembrane segments spans residues 182 to 202 (LESN…WIAI), 229 to 249 (LFTI…VVFV), 264 to 284 (GFVA…PIYV), 371 to 391 (ISCS…QINY), and 409 to 429 (IIGT…PVAM). An FYXDWWN motif motif is present at residues 491–497 (FYGDWWN). 2 helical membrane passes run 535 to 555 (ATLF…FAIF) and 590 to 610 (VVFS…YLTL). Histidine 547 is a catalytic residue.

This sequence belongs to the membrane-bound acyltransferase family. Sterol o-acyltransferase subfamily.

The protein localises to the endoplasmic reticulum membrane. The enzyme catalyses lanosterol + an acyl-CoA = lanosteryl ester + CoA. Functionally, sterol O-acyltransferase that catalyzes the formation of stery esters. The protein is Sterol O-acyltransferase 1 of Saccharomyces cerevisiae (strain ATCC 204508 / S288c) (Baker's yeast).